An 810-amino-acid chain; its full sequence is Phospholipase D alpha 1 (810 aa).

Positions 1 to 36 (MAQHLLHGTLHATIYEVDDLHTGGLRSGFFGKILAN) are excised as a propeptide. A C2 domain is found at 1-126 (MAQHLLHGTL…IHGEEVDQWV (126 aa)). D187 is a binding site for Ca(2+). The 40-residue stretch at 327–366 (AMFTHHQKIVVVDSEMPSRGGSQMRRIVSFVGGIDLCDGR) folds into the PLD phosphodiesterase 1 domain. Active-site residues include H332, K334, and D339. H332 contributes to the a 1,2-diacyl-sn-glycero-3-phosphate binding site. Ca(2+) contacts are provided by H372 and H406. A 1,2-diacyl-sn-glycero-3-phosphate is bound by residues Q522 and H661. A PLD phosphodiesterase 2 domain is found at 656-683 (FMIYVHTKMMIVDDEYIIIGSANINQRS). Residues H661, K663, and D668 contribute to the active site. Residue E722 participates in Ca(2+) binding.

The protein belongs to the phospholipase D family. C2-PLD subfamily. It depends on Ca(2+) as a cofactor.

It is found in the cytoplasm. The protein localises to the membrane. It carries out the reaction a 1,2-diacyl-sn-glycero-3-phosphocholine + H2O = a 1,2-diacyl-sn-glycero-3-phosphate + choline + H(+). Functionally, hydrolyzes glycerol-phospholipids at the terminal phosphodiesteric bond. Plays an important role in various cellular processes, including phytohormone action, vesicular trafficking, secretion, cytoskeletal arrangement, meiosis, tumor promotion, pathogenesis, membrane deterioration and senescence. The protein is Phospholipase D alpha 1 (PLD1) of Brassica oleracea var. capitata (Cabbage).